The sequence spans 178 residues: SCAN domain-containing protein 1 (178 aa).

The interval 1-107 is disordered; the sequence is MAATEQSLAP…GSRPGPETFR (107 aa). Residues 9-18 are compositionally biased toward low complexity; the sequence is APAGSSAPPS. Residues 36–54 show a composition bias toward polar residues; sequence GSSSTPEAPSIPDSSNPSA. The 72-residue stretch at 107 to 178 folds into the SCAN box domain; the sequence is RQRFRQFRYQ…RRRTDVRITG (72 aa).

Interacts with ZNF202.

It localises to the nucleus. Functionally, may regulate transcriptional activity. The sequence is that of SCAN domain-containing protein 1 (SCAND1) from Bos taurus (Bovine).